Consider the following 160-residue polypeptide: SsrA-binding protein (160 aa).

Residues 132–160 (KEFDKRDTMRERDSNRELQRAVRNKGKEE) are disordered.

Belongs to the SmpB family.

The protein resides in the cytoplasm. Functionally, required for rescue of stalled ribosomes mediated by trans-translation. Binds to transfer-messenger RNA (tmRNA), required for stable association of tmRNA with ribosomes. tmRNA and SmpB together mimic tRNA shape, replacing the anticodon stem-loop with SmpB. tmRNA is encoded by the ssrA gene; the 2 termini fold to resemble tRNA(Ala) and it encodes a 'tag peptide', a short internal open reading frame. During trans-translation Ala-aminoacylated tmRNA acts like a tRNA, entering the A-site of stalled ribosomes, displacing the stalled mRNA. The ribosome then switches to translate the ORF on the tmRNA; the nascent peptide is terminated with the 'tag peptide' encoded by the tmRNA and targeted for degradation. The ribosome is freed to recommence translation, which seems to be the essential function of trans-translation. In Pseudomonas putida (strain ATCC 47054 / DSM 6125 / CFBP 8728 / NCIMB 11950 / KT2440), this protein is SsrA-binding protein.